A 432-amino-acid chain; its full sequence is Neuronal pentraxin-1 (432 aa).

The signal sequence occupies residues Met-1–Ala-22. Residues Arg-88–Ser-122 form a disordered region. Residues Asn-154 and Asn-193 are each glycosylated (N-linked (GlcNAc...) asparagine). The Pentraxin (PTX) domain occupies Asp-226 to Cys-428. A disulfide bridge links Cys-256 with Cys-316. Asn-280, Glu-358, Gln-359, Asp-360, and Gln-370 together coordinate Ca(2+).

Homooligomer or heterooligomer (probably pentamer) with neuronal pentraxin receptor (NPTXR). Ca(2+) serves as cofactor. As to expression, expressed in brain and kidney.

It localises to the secreted. The protein resides in the cytoplasmic vesicle. Its subcellular location is the secretory vesicle. It is found in the endoplasmic reticulum. In terms of biological role, may be involved in mediating uptake of synaptic material during synapse remodeling or in mediating the synaptic clustering of AMPA glutamate receptors at a subset of excitatory synapses. The protein is Neuronal pentraxin-1 (Nptx1) of Mus musculus (Mouse).